The primary structure comprises 333 residues: Anthranilate phosphoribosyltransferase (333 aa).

Residues Gly-80, 83 to 84 (GD), Thr-88, 90 to 93 (NLST), 108 to 116 (KHGNRSASG), and Ser-120 each bind 5-phospho-alpha-D-ribose 1-diphosphate. Gly-80 serves as a coordination point for anthranilate. Ser-92 serves as a coordination point for Mg(2+). Asn-111 contacts anthranilate. An anthranilate-binding site is contributed by Arg-166. Mg(2+) contacts are provided by Asp-224 and Glu-225.

The protein belongs to the anthranilate phosphoribosyltransferase family. As to quaternary structure, homodimer. Mg(2+) is required as a cofactor.

It catalyses the reaction N-(5-phospho-beta-D-ribosyl)anthranilate + diphosphate = 5-phospho-alpha-D-ribose 1-diphosphate + anthranilate. It functions in the pathway amino-acid biosynthesis; L-tryptophan biosynthesis; L-tryptophan from chorismate: step 2/5. Catalyzes the transfer of the phosphoribosyl group of 5-phosphorylribose-1-pyrophosphate (PRPP) to anthranilate to yield N-(5'-phosphoribosyl)-anthranilate (PRA). The polypeptide is Anthranilate phosphoribosyltransferase (Pyrobaculum aerophilum (strain ATCC 51768 / DSM 7523 / JCM 9630 / CIP 104966 / NBRC 100827 / IM2)).